A 473-amino-acid polypeptide reads, in one-letter code: Photosystem II CP43 reaction center protein (473 aa).

Positions 1–14 (MKTLYSLRRFYPVE) are excised as a propeptide. N-acetylthreonine is present on T15. The residue at position 15 (T15) is a Phosphothreonine. Transmembrane regions (helical) follow at residues 69–93 (LFEVAHFVPEKPMYEQGLILLPHLA), 134–155 (LLGPETLEESFPFFGYVWKDRN), 178–200 (KALYFGGVYDTWAPGGGDVRKIT), 255–275 (KPFAWARRAFVWSGEAYLSYS), and 291–312 (WFNNTAYPSEFYGPTGPEASQA). [CaMn4O5] cluster is bound at residue E367. A helical membrane pass occupies residues 447–471 (RARAAAAGFEKGIDRDFEPVLSMTP).

This sequence belongs to the PsbB/PsbC family. PsbC subfamily. PSII is composed of 1 copy each of membrane proteins PsbA, PsbB, PsbC, PsbD, PsbE, PsbF, PsbH, PsbI, PsbJ, PsbK, PsbL, PsbM, PsbT, PsbX, PsbY, PsbZ, Psb30/Ycf12, at least 3 peripheral proteins of the oxygen-evolving complex and a large number of cofactors. It forms dimeric complexes. The cofactor is Binds multiple chlorophylls and provides some of the ligands for the Ca-4Mn-5O cluster of the oxygen-evolving complex. It may also provide a ligand for a Cl- that is required for oxygen evolution. PSII binds additional chlorophylls, carotenoids and specific lipids..

The protein resides in the plastid. It localises to the chloroplast thylakoid membrane. Its function is as follows. One of the components of the core complex of photosystem II (PSII). It binds chlorophyll and helps catalyze the primary light-induced photochemical processes of PSII. PSII is a light-driven water:plastoquinone oxidoreductase, using light energy to abstract electrons from H(2)O, generating O(2) and a proton gradient subsequently used for ATP formation. The chain is Photosystem II CP43 reaction center protein from Calycanthus floridus var. glaucus (Eastern sweetshrub).